Here is a 360-residue protein sequence, read N- to C-terminus: Photosystem II protein D1 (360 aa).

3 helical membrane-spanning segments follow: residues 30–47 (YVGW…TAAA), 119–134 (HFLI…QWEL), and 143–157 (WICV…AAFA). Histidine 119 is a binding site for chlorophyll a. Tyrosine 127 contacts pheophytin a. 2 residues coordinate [CaMn4O5] cluster: aspartate 171 and glutamate 190. A helical membrane pass occupies residues 198–219 (FHMAGVAGMFGGSLFSAMHGSL). Histidine 199 provides a ligand contact to chlorophyll a. A quinone is bound by residues histidine 216 and 265 to 266 (SF). Histidine 216 provides a ligand contact to Fe cation. Histidine 273 contacts Fe cation. The chain crosses the membrane as a helical span at residues 275 to 289 (FLAVFPVVCVWLTSM). The [CaMn4O5] cluster site is built by histidine 333, glutamate 334, aspartate 343, and alanine 345. A propeptide spanning residues 346 to 360 (AAESTTVALSAPAIG) is cleaved from the precursor.

It belongs to the reaction center PufL/M/PsbA/D family. PSII is composed of 1 copy each of membrane proteins PsbA, PsbB, PsbC, PsbD, PsbE, PsbF, PsbH, PsbI, PsbJ, PsbK, PsbL, PsbM, PsbT, PsbX, PsbY, Psb30/Ycf12, peripheral proteins PsbO, CyanoQ (PsbQ), PsbU, PsbV and a large number of cofactors. It forms dimeric complexes. The D1/D2 heterodimer binds P680, chlorophylls that are the primary electron donor of PSII, and subsequent electron acceptors. It shares a non-heme iron and each subunit binds pheophytin, quinone, additional chlorophylls, carotenoids and lipids. D1 provides most of the ligands for the Mn4-Ca-O5 cluster of the oxygen-evolving complex (OEC). There is also a Cl(-1) ion associated with D1 and D2, which is required for oxygen evolution. The PSII complex binds additional chlorophylls, carotenoids and specific lipids. serves as cofactor. Post-translationally, tyr-162 forms a radical intermediate that is referred to as redox-active TyrZ, YZ or Y-Z. In terms of processing, C-terminally processed by CtpA; processing is essential to allow assembly of the oxygen-evolving complex and thus photosynthetic growth.

The protein localises to the cellular thylakoid membrane. The enzyme catalyses 2 a plastoquinone + 4 hnu + 2 H2O = 2 a plastoquinol + O2. Its function is as follows. Photosystem II (PSII) is a light-driven water:plastoquinone oxidoreductase that uses light energy to abstract electrons from H(2)O, generating O(2) and a proton gradient subsequently used for ATP formation. It consists of a core antenna complex that captures photons, and an electron transfer chain that converts photonic excitation into a charge separation. The D1/D2 (PsbA/PsbD) reaction center heterodimer binds P680, the primary electron donor of PSII as well as several subsequent electron acceptors. The protein is Photosystem II protein D1 of Prochlorococcus marinus (strain MIT 9301).